Reading from the N-terminus, the 143-residue chain is Large ribosomal subunit protein uL13 (143 aa).

It belongs to the universal ribosomal protein uL13 family. In terms of assembly, part of the 50S ribosomal subunit.

Functionally, this protein is one of the early assembly proteins of the 50S ribosomal subunit, although it is not seen to bind rRNA by itself. It is important during the early stages of 50S assembly. The protein is Large ribosomal subunit protein uL13 of Natranaerobius thermophilus (strain ATCC BAA-1301 / DSM 18059 / JW/NM-WN-LF).